A 431-amino-acid polypeptide reads, in one-letter code: Adenylosuccinate lyase (431 aa).

N(6)-(1,2-dicarboxyethyl)-AMP-binding positions include 4-5 (RY), 67-69 (RHD), and 93-94 (TS). His141 acts as the Proton donor/acceptor in catalysis. Gln212 lines the N(6)-(1,2-dicarboxyethyl)-AMP pocket. The active-site Proton donor/acceptor is the Ser262. N(6)-(1,2-dicarboxyethyl)-AMP-binding positions include Ser263, 268–270 (KRN), Asn276, and 307–311 (SAERI).

This sequence belongs to the lyase 1 family. Adenylosuccinate lyase subfamily. As to quaternary structure, homodimer and homotetramer. Residues from neighboring subunits contribute catalytic and substrate-binding residues to each active site.

The enzyme catalyses N(6)-(1,2-dicarboxyethyl)-AMP = fumarate + AMP. It catalyses the reaction (2S)-2-[5-amino-1-(5-phospho-beta-D-ribosyl)imidazole-4-carboxamido]succinate = 5-amino-1-(5-phospho-beta-D-ribosyl)imidazole-4-carboxamide + fumarate. It functions in the pathway purine metabolism; AMP biosynthesis via de novo pathway; AMP from IMP: step 2/2. Its pathway is purine metabolism; IMP biosynthesis via de novo pathway; 5-amino-1-(5-phospho-D-ribosyl)imidazole-4-carboxamide from 5-amino-1-(5-phospho-D-ribosyl)imidazole-4-carboxylate: step 2/2. In terms of biological role, catalyzes two reactions in de novo purine nucleotide biosynthesis. Catalyzes the breakdown of 5-aminoimidazole- (N-succinylocarboxamide) ribotide (SAICAR or 2-[5-amino-1-(5-phospho-beta-D-ribosyl)imidazole-4-carboxamido]succinate) to 5-aminoimidazole-4-carboxamide ribotide (AICAR or 5-amino-1-(5-phospho-beta-D-ribosyl)imidazole-4-carboxamide) and fumarate, and of adenylosuccinate (ADS or N(6)-(1,2-dicarboxyethyl)-AMP) to adenosine monophosphate (AMP) and fumarate. In Staphylococcus epidermidis (strain ATCC 35984 / DSM 28319 / BCRC 17069 / CCUG 31568 / BM 3577 / RP62A), this protein is Adenylosuccinate lyase (purB).